Reading from the N-terminus, the 430-residue chain is Putative ABC transporter periplasmic-binding protein YcjN (430 aa).

An N-terminal signal peptide occupies residues 1–19 (MIKSKIVLLSALVSCALIS).

Belongs to the bacterial solute-binding protein 1 family.

The protein localises to the periplasm. In terms of biological role, probably part of the binding-protein-dependent transport system YcjNOP. This Escherichia coli (strain K12) protein is Putative ABC transporter periplasmic-binding protein YcjN (ycjN).